The following is a 725-amino-acid chain: Envelope glycoprotein H (725 aa).

The N-terminal stretch at 1–19 (MKLSLILSIALCSTRVVYA) is a signal peptide. Residues 20 to 700 (AGAEAPRISR…LVNVRPSMPY (681 aa)) are Virion surface-facing. Residues N38 and N50 are each glycosylated (N-linked (GlcNAc...) asparagine; by host). Residues 184 to 247 (TGYTVTVSLA…QTPDHDLLVV (64 aa)) form an interaction with gL region. N-linked (GlcNAc...) asparagine; by host glycosylation is found at N319, N459, N621, and N681. Residues 701–721 (SVVVALVIIAILMALGLYRLC) traverse the membrane as a helical segment. Residues 722–725 (RQKR) lie on the Intravirion side of the membrane.

It belongs to the herpesviridae glycoprotein H family. As to quaternary structure, interacts with glycoprotein L (gL); this interaction is necessary for the correct processing and cell surface expression of gH. The heterodimer gH/gL seems to interact with gB trimers during fusion. In terms of processing, N-glycosylated, O-glycosylated, and sialylated.

Its subcellular location is the virion membrane. The protein resides in the host cell membrane. The protein localises to the host endosome membrane. In terms of biological role, the heterodimer glycoprotein H-glycoprotein L is required for the fusion of viral and plasma membranes leading to virus entry into the host cell. Following initial binding to host receptor, membrane fusion is mediated by the fusion machinery composed of gB and the heterodimer gH/gL. May also be involved in the fusion between the virion envelope and the outer nuclear membrane during virion morphogenesis. The sequence is that of Envelope glycoprotein H from Murid herpesvirus 1 (strain Smith) (MuHV-1).